Consider the following 345-residue polypeptide: Probable dual-specificity RNA methyltransferase RlmN (345 aa).

The Proton acceptor role is filled by Glu-93. Residues 99 to 326 (DDERATLCIS…TTIRASRGED (228 aa)) enclose the Radical SAM core domain. Cys-106 and Cys-331 form a disulfide bridge. 3 residues coordinate [4Fe-4S] cluster: Cys-113, Cys-117, and Cys-120. S-adenosyl-L-methionine is bound by residues 158–159 (GE), Ser-190, 212–214 (SLH), and His-288. Cys-331 serves as the catalytic S-methylcysteine intermediate.

Belongs to the radical SAM superfamily. RlmN family. It depends on [4Fe-4S] cluster as a cofactor.

It is found in the cytoplasm. The catalysed reaction is adenosine(2503) in 23S rRNA + 2 reduced [2Fe-2S]-[ferredoxin] + 2 S-adenosyl-L-methionine = 2-methyladenosine(2503) in 23S rRNA + 5'-deoxyadenosine + L-methionine + 2 oxidized [2Fe-2S]-[ferredoxin] + S-adenosyl-L-homocysteine. The enzyme catalyses adenosine(37) in tRNA + 2 reduced [2Fe-2S]-[ferredoxin] + 2 S-adenosyl-L-methionine = 2-methyladenosine(37) in tRNA + 5'-deoxyadenosine + L-methionine + 2 oxidized [2Fe-2S]-[ferredoxin] + S-adenosyl-L-homocysteine. Its function is as follows. Specifically methylates position 2 of adenine 2503 in 23S rRNA and position 2 of adenine 37 in tRNAs. This is Probable dual-specificity RNA methyltransferase RlmN from Bacteroides thetaiotaomicron (strain ATCC 29148 / DSM 2079 / JCM 5827 / CCUG 10774 / NCTC 10582 / VPI-5482 / E50).